Here is a 436-residue protein sequence, read N- to C-terminus: tRNA modification GTPase MnmE (436 aa).

Residues arginine 20, glutamate 77, and lysine 117 each contribute to the (6S)-5-formyl-5,6,7,8-tetrahydrofolate site. Residues 214–360 (GLKIVIAGAP…FIKELESFCL (147 aa)) enclose the TrmE-type G domain. Residues 224–229 (NSGKSS), 243–249 (MEEAGTT), and 268–271 (DTAG) each bind GTP. Mg(2+) contacts are provided by serine 228 and threonine 249. Residue lysine 436 coordinates (6S)-5-formyl-5,6,7,8-tetrahydrofolate.

The protein belongs to the TRAFAC class TrmE-Era-EngA-EngB-Septin-like GTPase superfamily. TrmE GTPase family. In terms of assembly, homodimer. Heterotetramer of two MnmE and two MnmG subunits. K(+) is required as a cofactor.

The protein localises to the cytoplasm. Its function is as follows. Exhibits a very high intrinsic GTPase hydrolysis rate. Involved in the addition of a carboxymethylaminomethyl (cmnm) group at the wobble position (U34) of certain tRNAs, forming tRNA-cmnm(5)s(2)U34. This chain is tRNA modification GTPase MnmE, found in Bartonella quintana (strain Toulouse) (Rochalimaea quintana).